We begin with the raw amino-acid sequence, 24 residues long: Brevinin-1Sb (24 aa).

Residues Cys18 and Cys24 are joined by a disulfide bond.

As to expression, expressed by the skin glands.

The protein localises to the secreted. Antibacterial activity against Gram-negative bacterium E.coli. This Lithobates sphenocephalus (Southern leopard frog) protein is Brevinin-1Sb.